A 107-amino-acid chain; its full sequence is SH3 domain-binding glutamic acid-rich-like protein 2 (107 aa).

Residues 61 to 67 (QGNPLPP) carry the SH3-binding motif.

It belongs to the SH3BGR family.

The protein resides in the nucleus. The polypeptide is SH3 domain-binding glutamic acid-rich-like protein 2 (SH3BGRL2) (Pongo abelii (Sumatran orangutan)).